The primary structure comprises 182 residues: Oligoribonuclease (182 aa).

Residues 8 to 171 form the Exonuclease domain; the sequence is LIWIDLEMTG…DDIRESIKEL (164 aa). The active site involves Tyr129.

This sequence belongs to the oligoribonuclease family.

It is found in the cytoplasm. Its function is as follows. 3'-to-5' exoribonuclease specific for small oligoribonucleotides. The protein is Oligoribonuclease of Actinobacillus succinogenes (strain ATCC 55618 / DSM 22257 / CCUG 43843 / 130Z).